The following is a 218-amino-acid chain: UPF0502 protein Shewana3_1622 (218 aa).

It belongs to the UPF0502 family.

This chain is UPF0502 protein Shewana3_1622, found in Shewanella sp. (strain ANA-3).